The sequence spans 140 residues: MQFFVLSHNLQIHSESVPSFTPSELAEGLSLHSDHINTNALNHPHWMVLVESDLSHQELAREVVNAWKKFRNSLGHSMNHSFIALGGRKDSKATPGSPLQEGYWGVDVVECANPDSFLKSINWDALKASRPVDGVFEVRD.

This is an uncharacterized protein from Synechococcus sp. (strain WH8020).